A 534-amino-acid polypeptide reads, in one-letter code: Anther-specific proline-rich protein APG (534 aa).

The N-terminal stretch at 1 to 35 (MKRSSLVDSCSYSRIFRSIFCLLSFCIFFLTTTNA) is a signal peptide. The span at 59–196 (NPPTPDPSPK…SPKPAPSPPK (138 aa)) shows a compositional bias: pro residues. Positions 59–202 (NPPTPDPSPK…SPPKPENKTI (144 aa)) are disordered. Ser-211 (nucleophile) is an active-site residue. Residues Asp-508 and His-511 contribute to the active site.

The protein belongs to the 'GDSL' lipolytic enzyme family. As to expression, found in sporophytic and gametophytic cell types in the anther, only in male fertile plants.

This chain is Anther-specific proline-rich protein APG (APG), found in Arabidopsis thaliana (Mouse-ear cress).